Consider the following 567-residue polypeptide: DNA-binding protein REPIN1 (567 aa).

Residues 17–52 (PRLLSGPSQESPQTLGKESRGLRQQGTSVAQSGAQA) form a disordered region. The span at 22 to 50 (GPSQESPQTLGKESRGLRQQGTSVAQSGA) shows a compositional bias: polar residues. Ser27 is modified (phosphoserine). At Thr30 the chain carries Phosphothreonine. Lys33 bears the N6-acetyllysine mark. Residues 57–79 (HRCAHCRRHFPGWVALWLHTRRC) form a C2H2-type 1; atypical zinc finger. 7 consecutive C2H2-type zinc fingers follow at residues 85–107 (LPCP…RQVH), 116–138 (FACH…LRAH), 145–168 (IACP…RRCH), 177–199 (FICG…KRVH), 236–258 (FQCA…RRVH), 264–286 (HQCP…RRIH), and 292–314 (YPCK…SKIH). Position 276 is an N6-acetyllysine (Lys276). The segment covering 305–315 (PNLLSHSKIHK) has biased composition (basic residues). The interval 305–372 (PNLLSHSKIH…HPQDPIEAPP (68 aa)) is disordered. The segment covering 345-362 (PAVPLKPAQEPPPGAPPE) has biased composition (pro residues). C2H2-type zinc fingers lie at residues 375 to 397 (YSCD…QRQH), 403 to 425 (FTCA…SRVH), 431 to 453 (FACE…RRDH), 459 to 481 (FVCP…RRIH), 487 to 509 (YVCP…RRIH), 515 to 537 (YACP…RKSH), and 543 to 565 (FCCA…QKKH).

Homodimers and homomultimers. Found in a complex with RIP60 and RIP100. As to expression, expressed in adipose tissue and bone tissue.

Its subcellular location is the nucleus. The protein resides in the cytoplasm. It is found in the cytosol. Its function is as follows. Sequence-specific double-stranded DNA-binding protein. Binds ATT-rich and T-rich DNA sequences and facilitates DNA bending. May regulate the expression of genes involved in cellular fatty acid import, including SCARB1/CD36, and genes involved in lipid droplet formation. May regulate the expression of LCN2, and thereby influence iron metabolism and apoptosis-related pathways. May regulate the expression of genes involved in glucose transport. This is DNA-binding protein REPIN1 (REPIN1) from Homo sapiens (Human).